We begin with the raw amino-acid sequence, 570 residues long: Proline--tRNA ligase (570 aa).

This sequence belongs to the class-II aminoacyl-tRNA synthetase family. ProS type 1 subfamily. As to quaternary structure, homodimer.

The protein resides in the cytoplasm. The catalysed reaction is tRNA(Pro) + L-proline + ATP = L-prolyl-tRNA(Pro) + AMP + diphosphate. Functionally, catalyzes the attachment of proline to tRNA(Pro) in a two-step reaction: proline is first activated by ATP to form Pro-AMP and then transferred to the acceptor end of tRNA(Pro). As ProRS can inadvertently accommodate and process non-cognate amino acids such as alanine and cysteine, to avoid such errors it has two additional distinct editing activities against alanine. One activity is designated as 'pretransfer' editing and involves the tRNA(Pro)-independent hydrolysis of activated Ala-AMP. The other activity is designated 'posttransfer' editing and involves deacylation of mischarged Ala-tRNA(Pro). The misacylated Cys-tRNA(Pro) is not edited by ProRS. This Clostridium beijerinckii (strain ATCC 51743 / NCIMB 8052) (Clostridium acetobutylicum) protein is Proline--tRNA ligase.